The following is a 234-amino-acid chain: Isoprenyl transferase (234 aa).

Residue D13 is part of the active site. Residue D13 participates in Mg(2+) binding. Substrate-binding positions include 14 to 17 (GNGR), W18, R26, H30, and 58 to 60 (STE). N61 acts as the Proton acceptor in catalysis. Residues W62, R64, R180, and 186 to 188 (RLS) each bind substrate. A Mg(2+)-binding site is contributed by E199.

The protein belongs to the UPP synthase family. In terms of assembly, homodimer. It depends on Mg(2+) as a cofactor.

Its function is as follows. Catalyzes the condensation of isopentenyl diphosphate (IPP) with allylic pyrophosphates generating different type of terpenoids. This is Isoprenyl transferase (uppS) from Helicobacter pylori (strain ATCC 700392 / 26695) (Campylobacter pylori).